Here is a 1295-residue protein sequence, read N- to C-terminus: Protein FORGETTER 1 (1295 aa).

3 stretches are compositionally biased toward pro residues: residues 1 to 14 (MTQS…PLPA), 75 to 89 (PQQP…PPPI), and 162 to 177 (PPTP…PPPE). Disordered stretches follow at residues 1 to 20 (MTQS…HSAA), 68 to 107 (RPQF…PAHG), 153 to 204 (LTAS…MDYR), and 626 to 688 (PEQP…NDSD). Over residues 178 to 193 (EVNEEAIEVEREEDEG) the composition is skewed to acidic residues. A Nuclear localization signal motif is present at residues 643–650 (RKRHSASP). The segment covering 669–688 (DNESDLESEADSADDSNDSD) has biased composition (acidic residues). The segment at 691 to 741 (FQICQICSGEDERKKLLHCSECDKLFHPDCVVPPVIDLPSEAWICFSCKEK) adopts a PHD-type zinc-finger fold.

The protein belongs to the SBNO family. As to quaternary structure, interacts with SWI/SNF and ISWI chromatin remodelers such as BRM, CHR11 and CHR17. Binds to histone H3.

It localises to the nucleus. Required for normal embryo development. Necessary to acquire heat stress (HS) memory, by modulating nucleosome occupancy and regulating heat-induced gene expression. Associates globally with the nucleosome-poor regions flanking the transcription units of expressed genes. Binds to the promoter regions, primarily to the proximal promoter just upstream of the transcriptional start sites (TSS) and somewhat more weakly to the region downstream of the transcription termination site (TTS), of actively expressed genes (e.g. HSA32, HSP18.2 and HSP22.0) in a heat-dependent fashion. The chain is Protein FORGETTER 1 from Arabidopsis thaliana (Mouse-ear cress).